Here is a 318-residue protein sequence, read N- to C-terminus: MAPKQLRIGTRASQLALWQANWVKGELEKRYPGMAVELVKIKTMGDKILDVPLAQVGGKGLFVKEIEEAMLRGEIDIAVHSMKDVPTEFPEGLGLYCITEREDPRDAVISRGVKFADLPQGARIGTSALRRQAQILKVRPDLQMVVIRGNVETRIRKLTDENLDAVILAAAGLNRLGFADQVSEYLPVELSLPAIGQGALGIECRLDDETIKDTIAFFNHPDTAHAVRAERALLWRCEGGCQVPIAAHGQVSGDTLTLTGFVASVDGTRSVKDTISGPVTECEKLGIALAEKLLADGAHEILAEVYQREVAREKEIPV.

An S-(dipyrrolylmethanemethyl)cysteine modification is found at cysteine 241.

This sequence belongs to the HMBS family. In terms of assembly, monomer. Dipyrromethane is required as a cofactor.

It catalyses the reaction 4 porphobilinogen + H2O = hydroxymethylbilane + 4 NH4(+). Its pathway is porphyrin-containing compound metabolism; protoporphyrin-IX biosynthesis; coproporphyrinogen-III from 5-aminolevulinate: step 2/4. Tetrapolymerization of the monopyrrole PBG into the hydroxymethylbilane pre-uroporphyrinogen in several discrete steps. This is Porphobilinogen deaminase from Geobacter metallireducens (strain ATCC 53774 / DSM 7210 / GS-15).